The primary structure comprises 88 residues: Large ribosomal subunit protein eL20 (88 aa).

It belongs to the eukaryotic ribosomal protein eL20 family. Part of the 50S ribosomal subunit. Binds 23S rRNA.

In Aeropyrum pernix (strain ATCC 700893 / DSM 11879 / JCM 9820 / NBRC 100138 / K1), this protein is Large ribosomal subunit protein eL20.